Here is a 487-residue protein sequence, read N- to C-terminus: 1,4-beta-D-glucan cellobiohydrolase CEL6A (487 aa).

Positions 1 to 17 (MASKLFLAAALLQGALS) are cleaved as a signal peptide. The 37-residue stretch at 27–63 (ACAAQWGQCGGQDYTGPTCCQSGSTCVVSNQWYSQCL) folds into the CBM1 domain. 2 disulfides stabilise this stretch: cysteine 35–cysteine 52 and cysteine 46–cysteine 62. Residues 64–117 (PGSSNPTTTSRTSTSSSSSTSRTSSSTSRPPSSVPTTPTSVPPTITTTPTTTPT) are compositionally biased toward low complexity. Positions 64 to 127 (PGSSNPTTTS…GGSGPGTTAS (64 aa)) are disordered. Residues tryptophan 175 and aspartate 177 each coordinate substrate. Aspartate 216 is a catalytic residue. Catalysis depends on aspartate 262, which acts as the Proton donor. Positions 307, 310, 346, 407, 435, and 439 each coordinate substrate. Aspartate 441 (proton acceptor) is an active-site residue.

This sequence belongs to the glycosyl hydrolase 6 (cellulase B) family.

The protein localises to the secreted. It carries out the reaction Hydrolysis of (1-&gt;4)-beta-D-glucosidic linkages in cellulose and cellotetraose, releasing cellobiose from the non-reducing ends of the chains.. In terms of biological role, exoglucanase that plays an important function in biomass degradation by catalyzing the hydrolysis of the non-reducing end beta-1,4-glucosidic linkages in cellulose and cellotetraose to release cellobiose. Shows higher hydrolytic activities on phosphoric acid-swollen cellulose (PSC), beta-glucan, and cellooligosaccharide derivatives than on cellulose, of which the best substrates were cellooligosaccharides. The protein is 1,4-beta-D-glucan cellobiohydrolase CEL6A of Pyricularia oryzae (strain 70-15 / ATCC MYA-4617 / FGSC 8958) (Rice blast fungus).